The sequence spans 169 residues: Holo-[acyl-carrier-protein] synthase (169 aa).

Mg(2+)-binding residues include D8 and E50.

The protein belongs to the P-Pant transferase superfamily. AcpS family. Mg(2+) is required as a cofactor.

The protein resides in the cytoplasm. It catalyses the reaction apo-[ACP] + CoA = holo-[ACP] + adenosine 3',5'-bisphosphate + H(+). Its function is as follows. Transfers the 4'-phosphopantetheine moiety from coenzyme A to a Ser of acyl-carrier-protein. The protein is Holo-[acyl-carrier-protein] synthase of Thermotoga maritima (strain ATCC 43589 / DSM 3109 / JCM 10099 / NBRC 100826 / MSB8).